A 442-amino-acid polypeptide reads, in one-letter code: 3-ketoacyl-CoA thiolase (442 aa).

The active-site Acyl-thioester intermediate is the Cys105. Residues His398 and Cys428 each act as proton acceptor in the active site.

It belongs to the thiolase-like superfamily. Thiolase family. In terms of assembly, heterotetramer of two alpha chains (FadJ) and two beta chains (FadI).

The protein localises to the cytoplasm. It catalyses the reaction an acyl-CoA + acetyl-CoA = a 3-oxoacyl-CoA + CoA. Its pathway is lipid metabolism; fatty acid beta-oxidation. Catalyzes the final step of fatty acid oxidation in which acetyl-CoA is released and the CoA ester of a fatty acid two carbons shorter is formed. In Aliivibrio fischeri (strain ATCC 700601 / ES114) (Vibrio fischeri), this protein is 3-ketoacyl-CoA thiolase.